A 130-amino-acid chain; its full sequence is ATP synthase epsilon chain, chloroplastic (130 aa).

The protein belongs to the ATPase epsilon chain family. As to quaternary structure, F-type ATPases have 2 components, CF(1) - the catalytic core - and CF(0) - the membrane proton channel. CF(1) has five subunits: alpha(3), beta(3), gamma(1), delta(1), epsilon(1). CF(0) has three main subunits: a, b and c.

It localises to the plastid. The protein localises to the chloroplast thylakoid membrane. In terms of biological role, produces ATP from ADP in the presence of a proton gradient across the membrane. This chain is ATP synthase epsilon chain, chloroplastic, found in Tupiella akineta (Green alga).